Reading from the N-terminus, the 360-residue chain is Aminomethyltransferase (360 aa).

Belongs to the GcvT family. As to quaternary structure, the glycine cleavage system is composed of four proteins: P, T, L and H.

It catalyses the reaction N(6)-[(R)-S(8)-aminomethyldihydrolipoyl]-L-lysyl-[protein] + (6S)-5,6,7,8-tetrahydrofolate = N(6)-[(R)-dihydrolipoyl]-L-lysyl-[protein] + (6R)-5,10-methylene-5,6,7,8-tetrahydrofolate + NH4(+). In terms of biological role, the glycine cleavage system catalyzes the degradation of glycine. The protein is Aminomethyltransferase of Pseudoalteromonas translucida (strain TAC 125).